Here is a 115-residue protein sequence, read N- to C-terminus: Succinate dehydrogenase assembly factor 3, mitochondrial (115 aa).

This sequence belongs to the complex I LYR family. SDHAF3 subfamily. As to quaternary structure, interacts with sdh2 within an sdh1-sdh2 subcomplex.

Its subcellular location is the mitochondrion matrix. Functionally, plays an essential role in the assembly of succinate dehydrogenase (SDH), an enzyme complex (also referred to as respiratory complex II) that is a component of both the tricarboxylic acid (TCA) cycle and the mitochondrial electron transport chain, and which couples the oxidation of succinate to fumarate with the reduction of ubiquinone (coenzyme Q) to ubiquinol. Promotes maturation of the iron-sulfur protein subunit sdh2 of the SDH catalytic dimer, protecting it from the deleterious effects of oxidants. May act together with SDHAF1. The sequence is that of Succinate dehydrogenase assembly factor 3, mitochondrial from Schizosaccharomyces pombe (strain 972 / ATCC 24843) (Fission yeast).